We begin with the raw amino-acid sequence, 299 residues long: MKQQDNPLIEQFLDALWLERNLAENTLASYRLDLHALVGWLTHHNSDLLRASPQDLQSFLAERIEGGYKATSSARLLSAMRRLFQYLYREKLREDDPTALLSSPKLPQRLPKDLSEAQVDALLNSPNVDIPLELRDKAMLEVLYATGLRVSELVGLTISDVSLRQGVVRVIGKGNKERLVPLGEEAVYWIENYMEHGRPWLVNGASLDVLFPSNRSQQMTRQTFWHRIKHYAILAGIDSERLSPHVLRHAFATHLLNHGADLRVVQMLLGHSDLSTTQIYTHVATERLRQLHQQHHPRA.

One can recognise a Core-binding (CB) domain in the interval 3–88 (QQDNPLIEQF…AMRRLFQYLY (86 aa)). Residues 109–293 (RLPKDLSEAQ…ATERLRQLHQ (185 aa)) enclose the Tyr recombinase domain. Catalysis depends on residues Arg-149, Lys-173, His-245, Arg-248, and His-271. Residue Tyr-280 is the O-(3'-phospho-DNA)-tyrosine intermediate of the active site.

It belongs to the 'phage' integrase family. XerD subfamily. As to quaternary structure, forms a cyclic heterotetrameric complex composed of two molecules of XerC and two molecules of XerD, in which XerC interacts with XerD via its C-terminal region, XerD interacts with XerC via its C-terminal region and so on.

Its subcellular location is the cytoplasm. Its activity is regulated as follows. FtsK may regulate the catalytic switch between XerC and XerD in the heterotetrameric complex during the two steps of the recombination process. Functionally, site-specific tyrosine recombinase, which acts by catalyzing the cutting and rejoining of the recombining DNA molecules. Binds cooperatively to specific DNA consensus sequences that are separated from XerC binding sites by a short central region, forming the heterotetrameric XerC-XerD complex that recombines DNA substrates. The complex is essential to convert dimers of the bacterial chromosome into monomers to permit their segregation at cell division. It also contributes to the segregational stability of plasmids. In the complex XerD specifically exchanges the bottom DNA strands. In Yersinia pestis, this protein is Tyrosine recombinase XerD.